Reading from the N-terminus, the 236-residue chain is Small ribosomal subunit protein uS5 (236 aa).

The region spanning 61 to 124 (ENQEILDIAL…NYAKLNIIEI (64 aa)) is the S5 DRBM domain.

This sequence belongs to the universal ribosomal protein uS5 family. Part of the 30S ribosomal subunit. Contacts protein S4.

Its function is as follows. With S4 and S12 plays an important role in translational accuracy. The chain is Small ribosomal subunit protein uS5 from Pyrococcus abyssi (strain GE5 / Orsay).